The primary structure comprises 169 residues: Transcription antitermination protein NusB (169 aa).

Residues 1-19 (MAEMKKTIDNKPAPKGEKK) are compositionally biased toward basic and acidic residues. The disordered stretch occupies residues 1 to 22 (MAEMKKTIDNKPAPKGEKKANR).

Belongs to the NusB family.

In terms of biological role, involved in transcription antitermination. Required for transcription of ribosomal RNA (rRNA) genes. Binds specifically to the boxA antiterminator sequence of the ribosomal RNA (rrn) operons. The chain is Transcription antitermination protein NusB from Rhodopseudomonas palustris (strain BisB18).